Reading from the N-terminus, the 469-residue chain is Acetyl-CoA decarbonylase/synthase complex subunit beta 1 (469 aa).

[Ni-Fe-S] cluster-binding residues include cysteine 189, cysteine 192, cysteine 278, and cysteine 280.

It belongs to the CdhC family. As to quaternary structure, monomer. The ACDS complex is made up of alpha, epsilon, beta, gamma and delta chains with a probable stoichiometry of (alpha(2)epsilon(2))(4)-beta(8)-(gamma(1)delta(1))(8) (Potential). [Ni-Fe-S] cluster is required as a cofactor.

The enzyme catalyses Co(I)-[corrinoid Fe-S protein] + acetyl-CoA + H(+) = methyl-Co(III)-[corrinoid Fe-S protein] + CO + CoA. Its pathway is one-carbon metabolism; methanogenesis from acetate. Its function is as follows. Part of a complex that catalyzes the reversible cleavage of acetyl-CoA, allowing growth on acetate as sole source of carbon and energy. The alpha-epsilon complex generates CO from CO(2), while the beta subunit (this protein) combines the CO with CoA and a methyl group to form acetyl-CoA. The methyl group, which is incorporated into acetyl-CoA, is transferred to the beta subunit by a corrinoid iron-sulfur protein (the gamma-delta complex). This chain is Acetyl-CoA decarbonylase/synthase complex subunit beta 1 (cdhC1), found in Methanosarcina thermophila.